A 275-amino-acid chain; its full sequence is NADH-quinone oxidoreductase subunit E 1 (275 aa).

The [2Fe-2S] cluster site is built by Cys99, Cys104, Cys140, and Cys144. The tract at residues 200–275 (LQAPEPVEEK…DKSKPAKKPR (76 aa)) is disordered. Basic and acidic residues predominate over residues 206–221 (VEEKKSVRASKAKDEQ). The segment covering 231 to 242 (AKPSTATDVTNP) has biased composition (polar residues). Residues 243–256 (TLKTPATARKAAAK) are compositionally biased toward low complexity. Residues 258 to 269 (VKIEGETVDKSK) are compositionally biased toward basic and acidic residues.

Belongs to the complex I 24 kDa subunit family. Requires [2Fe-2S] cluster as cofactor.

It catalyses the reaction a quinone + NADH + 5 H(+)(in) = a quinol + NAD(+) + 4 H(+)(out). Functionally, NDH-1 shuttles electrons from NADH, via FMN and iron-sulfur (Fe-S) centers, to quinones in the respiratory chain. The immediate electron acceptor for the enzyme in this species is believed to be ubiquinone. Couples the redox reaction to proton translocation (for every two electrons transferred, four hydrogen ions are translocated across the cytoplasmic membrane), and thus conserves the redox energy in a proton gradient. This Rhizobium meliloti (strain 1021) (Ensifer meliloti) protein is NADH-quinone oxidoreductase subunit E 1 (nuoE1).